The sequence spans 501 residues: MENGKCNGATTVKLPEIKFTKLFINGQFIDAASGKTFETIDPRNGEVIATIAEGDKEDVDLAVNAARYAFDHGPWPRMTGFERAKLINKFADLIEENIEELAKLDAVDGGKLFQLGKYADIPATAGHFRYNAGAADKIHGETLKMTRQSLFGYTLKEPIGVVGNIIPWNFPSIMFATKVAPAMAAGCTMVVKPAEQTSLSALFYAHLSKEAGIPDGVLNIVTGFGSTAGAAIASHMDVDKVSFTGSTDVGRKIMQAAAASNLKKVSLELGGKSPLLIFNDADIDKAADLALLGCFYNKGEICVASSRVFVQEGIYDKVVEKLVEKAKDWTVGDPFDSTARQGPQVDKRQFEKILSYIEHGKNEGATLLTGGKAIGDKGYFIQPTIFADVTEDMKIYQDEIFGPVMSLMKFKTVEEGIKCANNTKYGLAAGILSQDIDLINTVSRSIKAGIIWVNCYFGFDLDCPYGGYKMSGNCRESGMDALDNYLQTKSVVMPLHNSPWM.

Position 245-250 (245-250 (GSTDVG)) interacts with NAD(+). Glu-268 (proton acceptor) is an active-site residue. Cys-302 (nucleophile) is an active-site residue.

The protein belongs to the aldehyde dehydrogenase family. In terms of assembly, homotetramer.

It is found in the cytoplasm. The protein resides in the cytosol. The enzyme catalyses an aldehyde + NAD(+) + H2O = a carboxylate + NADH + 2 H(+). In terms of biological role, involved in ferulic acid and sinapic acid biosynthesis by oxidation of conyferylaldehyde and sinapaldehyde, respectively. Can oxidize L-lactaldehyde. Possesses activity on acetaldehyde and glycolaldehyde in vitro. This is Aldehyde dehydrogenase family 2 member C4 (ALDH2C4) from Arabidopsis thaliana (Mouse-ear cress).